We begin with the raw amino-acid sequence, 201 residues long: Large ribosomal subunit protein bL12m (201 aa).

The N-terminal 38 residues, 1 to 38, are a transit peptide targeting the mitochondrion; it reads MLPVAASRCLWGPRLGLRGAALRLARQQMPSVCAARQL. 2 disordered regions span residues 37–60 and 109–130; these read QLRSSSHRRSEALAGAPLDNAPKE and VSAAAPASEAAEEEDVPKQKER. Lys128, Lys141, Lys145, and Lys147 each carry N6-acetyllysine. Lys153 carries the post-translational modification N6-acetyllysine; alternate. Residue Lys153 is modified to N6-succinyllysine; alternate. Residue Lys153 forms a Glycyl lysine isopeptide (Lys-Gly) (interchain with G-Cter in ubiquitin) linkage. Lys165 is modified (N6-succinyllysine). N6-acetyllysine occurs at positions 166 and 176. Lys181 carries the N6-acetyllysine; alternate modification. Lys181 carries the N6-succinyllysine; alternate modification. Lys188 bears the N6-acetyllysine mark.

This sequence belongs to the bacterial ribosomal protein bL12 family. As to quaternary structure, component of the mitochondrial ribosome large subunit (39S) which comprises a 16S rRNA and about 50 distinct proteins. Interacts with NOA1. In terms of processing, two mature forms are produced by differential two-step proteolytic cleavage. Cleaved by the mitochondrial processing protease to produce the long mature form and subsequently by the mitochondrial intermediate protease to produce the short mature form. In the presence of CUL3, undergoes 'Lys-63'-linked ubiquitination at Lys-153 which results in proteasomal degradation.

Its subcellular location is the mitochondrion matrix. In terms of biological role, as a component of the mitochondrial large ribosomal subunit, plays a role in mitochondrial translation. When present in mitochondria as a free protein not associated with the ribosome, associates with mitochondrial RNA polymerase POLRMT to activate transcription. Required for POLRMT stability. This chain is Large ribosomal subunit protein bL12m (Mrpl12), found in Mus musculus (Mouse).